The following is a 429-amino-acid chain: Glucose-6-phosphate isomerase (429 aa).

Glu-282 serves as the catalytic Proton donor. Catalysis depends on residues His-303 and Lys-418.

The protein belongs to the GPI family.

It is found in the cytoplasm. It carries out the reaction alpha-D-glucose 6-phosphate = beta-D-fructose 6-phosphate. It participates in carbohydrate biosynthesis; gluconeogenesis. The protein operates within carbohydrate degradation; glycolysis; D-glyceraldehyde 3-phosphate and glycerone phosphate from D-glucose: step 2/4. Catalyzes the reversible isomerization of glucose-6-phosphate to fructose-6-phosphate. This chain is Glucose-6-phosphate isomerase, found in Mesomycoplasma hyopneumoniae (strain 232) (Mycoplasma hyopneumoniae).